The sequence spans 113 residues: Dolichyl-diphosphooligosaccharide--protein glycosyltransferase subunit dad-1 (113 aa).

The Cytoplasmic portion of the chain corresponds to 1–32 (MAAQVVPVLSKLFDDYQKTTSSKLKIIDAYMT). The chain crosses the membrane as a helical span at residues 33 to 53 (YILFTGIFQFIYCLLVGTFPF). The Lumenal portion of the chain corresponds to 54–55 (NS). Residues 56–78 (FLSGFISTVTSFVLASCLRMQVN) traverse the membrane as a helical segment. Residues 79-92 (QENRSEFTAVSTER) lie on the Cytoplasmic side of the membrane. Residues 93–113 (AFADFIFANLILHLVVVNFLG) traverse the membrane as a helical segment.

The protein belongs to the DAD/OST2 family. In terms of assembly, component of the oligosaccharyltransferase (OST) complex.

It localises to the endoplasmic reticulum membrane. It participates in protein modification; protein glycosylation. Its function is as follows. Subunit of the oligosaccharyl transferase (OST) complex that catalyzes the initial transfer of a defined glycan (Glc(3)Man(9)GlcNAc(2) in eukaryotes) from the lipid carrier dolichol-pyrophosphate to an asparagine residue within an Asn-X-Ser/Thr consensus motif in nascent polypeptide chains, the first step in protein N-glycosylation. N-glycosylation occurs cotranslationally and the complex associates with the Sec61 complex at the channel-forming translocon complex that mediates protein translocation across the endoplasmic reticulum (ER). All subunits are required for a maximal enzyme activity. Possesses cell death-inhibiting activity. Suppresses some programmed cell death in C.elegans. This is Dolichyl-diphosphooligosaccharide--protein glycosyltransferase subunit dad-1 from Caenorhabditis elegans.